A 624-amino-acid chain; its full sequence is Probable potassium transport system protein Kup 1 (624 aa).

A run of 12 helical transmembrane segments spans residues 10-30 (LALG…LYAL), 48-68 (LSLI…MIIF), 94-114 (PLFY…GMLT), 133-153 (LYPY…SLQA), 159-179 (IGYL…ILGI), 210-230 (FLLG…ADIG), 242-262 (FFIA…NLIV), 270-290 (PFFM…ATVA), 331-351 (IYVP…CLAF), 363-383 (IAVN…AVSI), 388-408 (TFNV…FLGA), and 413-433 (FITG…IMYS).

Belongs to the HAK/KUP transporter (TC 2.A.72) family.

It is found in the cell inner membrane. The catalysed reaction is K(+)(in) + H(+)(in) = K(+)(out) + H(+)(out). In terms of biological role, transport of potassium into the cell. Likely operates as a K(+):H(+) symporter. The polypeptide is Probable potassium transport system protein Kup 1 (Legionella pneumophila subsp. pneumophila (strain Philadelphia 1 / ATCC 33152 / DSM 7513)).